We begin with the raw amino-acid sequence, 672 residues long: tRNA 5-methylaminomethyl-2-thiouridine biosynthesis bifunctional protein MnmC (672 aa).

Residues 1 to 243 (MTSITHAELG…KREMIAGCME (243 aa)) form a tRNA (mnm(5)s(2)U34)-methyltransferase region. The interval 269–672 (IGGGIASAAL…LRKGKAITEL (404 aa)) is FAD-dependent cmnm(5)s(2)U34 oxidoreductase.

The protein in the N-terminal section; belongs to the methyltransferase superfamily. tRNA (mnm(5)s(2)U34)-methyltransferase family. In the C-terminal section; belongs to the DAO family. Requires FAD as cofactor.

The protein resides in the cytoplasm. It carries out the reaction 5-aminomethyl-2-thiouridine(34) in tRNA + S-adenosyl-L-methionine = 5-methylaminomethyl-2-thiouridine(34) in tRNA + S-adenosyl-L-homocysteine + H(+). Functionally, catalyzes the last two steps in the biosynthesis of 5-methylaminomethyl-2-thiouridine (mnm(5)s(2)U) at the wobble position (U34) in tRNA. Catalyzes the FAD-dependent demodification of cmnm(5)s(2)U34 to nm(5)s(2)U34, followed by the transfer of a methyl group from S-adenosyl-L-methionine to nm(5)s(2)U34, to form mnm(5)s(2)U34. This Vibrio vulnificus (strain YJ016) protein is tRNA 5-methylaminomethyl-2-thiouridine biosynthesis bifunctional protein MnmC.